A 247-amino-acid chain; its full sequence is Cytochrome c oxidase subunit 2 (247 aa).

A signal peptide spans 1-11 (MLLIINNIINN). At 12-38 (DVPTPWGVYFQDSATPNHEGIIELHDN) the chain is on the mitochondrial intermembrane side. Residues 39 to 59 (IMFYLVLILCLVSWLLFSIVK) traverse the membrane as a helical segment. Residues 60–78 (DGSKNPLPHKYLVHGQTIE) are Mitochondrial matrix-facing. The helical transmembrane segment at 79-101 (IIWTILPALVLLVIAFPSFILLY) threads the bilayer. The Mitochondrial intermembrane portion of the chain corresponds to 102 to 247 (LCDEVISPAM…KEFLTWLNEQ (146 aa)). Cu cation contacts are provided by His-182, Cys-217, Glu-219, Cys-221, His-225, and Met-228. Glu-219 contributes to the Mg(2+) binding site.

This sequence belongs to the cytochrome c oxidase subunit 2 family. As to quaternary structure, component of the cytochrome c oxidase (complex IV, CIV), a multisubunit enzyme composed of a catalytic core of 3 subunits and several supernumerary subunits. The complex exists as a monomer or a dimer and forms supercomplexes (SCs) in the inner mitochondrial membrane with ubiquinol-cytochrome c oxidoreductase (cytochrome b-c1 complex, complex III, CIII). Requires Cu cation as cofactor. The signal sequence of COX2 is processed by IMP1.

It is found in the mitochondrion inner membrane. It carries out the reaction 4 Fe(II)-[cytochrome c] + O2 + 8 H(+)(in) = 4 Fe(III)-[cytochrome c] + 2 H2O + 4 H(+)(out). Its function is as follows. Component of the cytochrome c oxidase, the last enzyme in the mitochondrial electron transport chain which drives oxidative phosphorylation. The respiratory chain contains 3 multisubunit complexes succinate dehydrogenase (complex II, CII), ubiquinol-cytochrome c oxidoreductase (cytochrome b-c1 complex, complex III, CIII) and cytochrome c oxidase (complex IV, CIV), that cooperate to transfer electrons derived from NADH and succinate to molecular oxygen, creating an electrochemical gradient over the inner membrane that drives transmembrane transport and the ATP synthase. Cytochrome c oxidase is the component of the respiratory chain that catalyzes the reduction of oxygen to water. Electrons originating from reduced cytochrome c in the intermembrane space (IMS) are transferred via the dinuclear copper A center (CU(A)) of subunit 2 and heme A of subunit 1 to the active site in subunit 1, a binuclear center (BNC) formed by heme A3 and copper B (CU(B)). The BNC reduces molecular oxygen to 2 water molecules using 4 electrons from cytochrome c in the IMS and 4 protons from the mitochondrial matrix. In Wickerhamomyces canadensis (Yeast), this protein is Cytochrome c oxidase subunit 2 (COX2).